We begin with the raw amino-acid sequence, 873 residues long: Leucine--tRNA ligase (873 aa).

Residues 42–52 (PYPSGKLHMGH) carry the 'HIGH' region motif. Residues 628 to 632 (KMAKS) carry the 'KMSKS' region motif. Lys-631 lines the ATP pocket.

Belongs to the class-I aminoacyl-tRNA synthetase family.

The protein resides in the cytoplasm. It carries out the reaction tRNA(Leu) + L-leucine + ATP = L-leucyl-tRNA(Leu) + AMP + diphosphate. This Aromatoleum aromaticum (strain DSM 19018 / LMG 30748 / EbN1) (Azoarcus sp. (strain EbN1)) protein is Leucine--tRNA ligase.